We begin with the raw amino-acid sequence, 202 residues long: Endothelin-1 (202 aa).

An N-terminal signal peptide occupies residues 1 to 25 (MDYLPVLFSLLLVVFQGAPEAAVLG). Positions 26-50 (AELSTGPDSGGEKPAPSAPWRPRRS) are excised as a propeptide. A disordered region spans residues 28–48 (LSTGPDSGGEKPAPSAPWRPR). 2 disulfide bridges follow: C53-C67 and C55-C63. The propeptide occupies 74–202 (VNTPEHIVPY…EKKVTHNRTH (129 aa)). The segment at 110–124 (CQCASQKDKKCWTFC) is endothelin-like.

This sequence belongs to the endothelin/sarafotoxin family.

The protein resides in the secreted. In terms of biological role, endothelins are endothelium-derived vasoconstrictor peptides. Probable ligand for G-protein coupled receptors EDNRA and EDNRB which activates PTK2B, BCAR1, BCAR3 and, GTPases RAP1 and RHOA cascade in glomerular mesangial cells. Also binds the DEAR/FBXW7-AS1 receptor. Promotes mesenteric arterial wall remodeling via activation of ROCK signaling and subsequent colocalization of NFATC3 with F-actin filaments. NFATC3 then translocates to the nucleus where it subsequently promotes the transcription of the smooth muscle hypertrophy and differentiation marker ACTA2. The polypeptide is Endothelin-1 (EDN1) (Felis catus (Cat)).